A 122-amino-acid chain; its full sequence is MKSLKIKKGDRVKVIAGNDKGAIGEVLSVDPARERVVVEGVNIRKHHRRDMPTPQGGTTKGGIISSEAPIHVSNVQLVTKIDGKDVVTRVGYRRVDVTKRRPDGSEYAAQRSVRYLKKEEAK.

Residues 43–64 (IRKHHRRDMPTPQGGTTKGGII) are disordered.

It belongs to the universal ribosomal protein uL24 family. Part of the 50S ribosomal subunit.

Functionally, one of two assembly initiator proteins, it binds directly to the 5'-end of the 23S rRNA, where it nucleates assembly of the 50S subunit. In terms of biological role, one of the proteins that surrounds the polypeptide exit tunnel on the outside of the subunit. This is Large ribosomal subunit protein uL24 from Cutibacterium acnes (strain DSM 16379 / KPA171202) (Propionibacterium acnes).